The following is a 1597-amino-acid chain: THO complex subunit 2 (1597 aa).

Disordered stretches follow at residues 1250–1274 (KSQRLQNDPPKSVASGSAGLNSKDR) and 1384–1597 (EPYP…RYQR). The span at 1419–1430 (GSSNYRGPSNDR) shows a compositional bias: polar residues. Composition is skewed to basic and acidic residues over residues 1458 to 1490 (TYNDRSRALRPTGPDRGDGFDQRDNRLREEYKK), 1500 to 1512 (FPEKPFQEGKDSS), 1522 to 1545 (YKRDSPSENEEKPNKRFKKDETIR), and 1554 to 1567 (RNTRDSGAAHRANE). Positions 1568–1582 (NQRYNGNRKSNTQAL) are enriched in polar residues.

This sequence belongs to the THOC2 family. As to quaternary structure, component of the THO complex, which is composed of HPR1, MFT1, THO2 and THP2. Together with SUB2, TEX1 and YRA1, THO forms the transcription/export (TREX) complex. THO associates with DNA and RNA in vitro.

It localises to the nucleus. Its function is as follows. Component the THO subcomplex of the TREX complex, which operates in coupling transcription elongation to mRNA export. The THO complex is recruited to transcribed genes and moves along the gene with the elongating polymerase during transcription. THO is important for stabilizing nascent RNA in the RNA polymerase II elongation complex by preventing formation of DNA:RNA hybrids behind the elongating polymerase. It functions in cotranscriptional formation of an export-competent messenger ribonucleoprotein particle (mRNP) by facilitating the loading of ATP-dependent RNA helicase SUB2 and the mRNA export factor YRA1 along the nascent mRNA. The protein is THO complex subunit 2 (THO2) of Saccharomyces cerevisiae (strain ATCC 204508 / S288c) (Baker's yeast).